Consider the following 371-residue polypeptide: Cytochrome b (371 aa).

The next 4 membrane-spanning stretches (helical) occupy residues Phe25 to Val45, Trp69 to Ile90, Trp105 to Leu125, and Phe170 to Ile190. Heme b is bound by residues His75 and His89. Heme b-binding residues include His174 and His188. His193 lines the a ubiquinone pocket. A run of 4 helical transmembrane segments spans residues Tyr218 to Phe238, Leu280 to His300, Leu312 to Thr332, and Tyr339 to Pro358.

This sequence belongs to the cytochrome b family. In terms of assembly, the cytochrome bc1 complex contains 3 respiratory subunits (MT-CYB, CYC1 and UQCRFS1), 2 core proteins (UQCRC1 and UQCRC2) and probably 6 low-molecular weight proteins. Requires heme b as cofactor.

The protein resides in the mitochondrion inner membrane. Component of the ubiquinol-cytochrome c reductase complex (complex III or cytochrome b-c1 complex) that is part of the mitochondrial respiratory chain. The b-c1 complex mediates electron transfer from ubiquinol to cytochrome c. Contributes to the generation of a proton gradient across the mitochondrial membrane that is then used for ATP synthesis. This Python molurus (Indian python) protein is Cytochrome b (MT-CYB).